The sequence spans 1089 residues: Probable transport protein MmpL8 (1089 aa).

Positions 1–26 (MCDVLMQPVRTPRPSTNLRSKPLRPT) are disordered. A run of 12 helical transmembrane segments spans residues 44–64 (WVVIAFWVALAGLLAPTVPSL), 222–242 (ITILLLVILLIIYGNPITMVL), 257–277 (LVAIAGLAGLGIANQSIIFMS), 316–336 (IGKVIAASAATVAITFLGMVF), 349–369 (LGISVAVVFFAAVTLLPALMV), 400–420 (KTHLLASALVLVILAGCAGLA), 555–575 (AISTVGGLIDALAYLQDLLGG), 874–894 (IIAMTVCIVLLILIVLLRAIV), 898–918 (YLIGSVIVSYLAALGIGVIVF), 930–950 (IPGLTFVILVAVGADYNMLLI), 973–993 (GGVITAAGLIMAASMYGLVFA), and 996–1016 (GSVVQGAFVLGTGLLLDTFLV). The segment at 1056-1078 (RTKRKPLLPKEEEEQSPPDDDDL) is disordered. Acidic residues predominate over residues 1066-1078 (EEEEQSPPDDDDL).

This sequence belongs to the resistance-nodulation-cell division (RND) (TC 2.A.6) family. MmpL subfamily.

Its subcellular location is the cell membrane. The sequence is that of Probable transport protein MmpL8 (mmpL8) from Mycobacterium tuberculosis (strain ATCC 25177 / H37Ra).